A 160-amino-acid chain; its full sequence is Transcription antitermination protein NusB (160 aa).

The protein belongs to the NusB family.

Functionally, involved in transcription antitermination. Required for transcription of ribosomal RNA (rRNA) genes. Binds specifically to the boxA antiterminator sequence of the ribosomal RNA (rrn) operons. The protein is Transcription antitermination protein NusB of Rhizobium leguminosarum bv. trifolii (strain WSM2304).